The sequence spans 87 residues: MANIKSAKKRIKVTEKKTLRNKMIKSALKTAIKKFEVAVQANNKAEAATLYVEAARALDMSASKGVVHKNMAARKKSRLAAKLNAMA.

The protein belongs to the bacterial ribosomal protein bS20 family.

Its function is as follows. Binds directly to 16S ribosomal RNA. The sequence is that of Small ribosomal subunit protein bS20 from Clostridium perfringens (strain 13 / Type A).